A 688-amino-acid chain; its full sequence is DNA ligase (688 aa).

Residues 38–42 (DEEYD), 87–88 (SL), and E118 each bind NAD(+). The active-site N6-AMP-lysine intermediate is the K120. 4 residues coordinate NAD(+): R141, E175, K291, and K315. Zn(2+) contacts are provided by C409, C412, C428, and C433. Residues 590–679 (VKLDILRGLT…AELKGYNFDE (90 aa)) enclose the BRCT domain.

This sequence belongs to the NAD-dependent DNA ligase family. LigA subfamily. Mg(2+) serves as cofactor. Requires Mn(2+) as cofactor.

It carries out the reaction NAD(+) + (deoxyribonucleotide)n-3'-hydroxyl + 5'-phospho-(deoxyribonucleotide)m = (deoxyribonucleotide)n+m + AMP + beta-nicotinamide D-nucleotide.. Functionally, DNA ligase that catalyzes the formation of phosphodiester linkages between 5'-phosphoryl and 3'-hydroxyl groups in double-stranded DNA using NAD as a coenzyme and as the energy source for the reaction. It is essential for DNA replication and repair of damaged DNA. In Thermotoga maritima (strain ATCC 43589 / DSM 3109 / JCM 10099 / NBRC 100826 / MSB8), this protein is DNA ligase.